The sequence spans 212 residues: Imidazole glycerol phosphate synthase subunit HisH (212 aa).

A Glutamine amidotransferase type-1 domain is found at 2-212; it reads QTAIIDYGMG…LTMLKNFLNW (211 aa). Cys-85 (nucleophile) is an active-site residue. Residues His-194 and Glu-196 contribute to the active site.

Heterodimer of HisH and HisF.

It localises to the cytoplasm. The catalysed reaction is 5-[(5-phospho-1-deoxy-D-ribulos-1-ylimino)methylamino]-1-(5-phospho-beta-D-ribosyl)imidazole-4-carboxamide + L-glutamine = D-erythro-1-(imidazol-4-yl)glycerol 3-phosphate + 5-amino-1-(5-phospho-beta-D-ribosyl)imidazole-4-carboxamide + L-glutamate + H(+). It carries out the reaction L-glutamine + H2O = L-glutamate + NH4(+). It functions in the pathway amino-acid biosynthesis; L-histidine biosynthesis; L-histidine from 5-phospho-alpha-D-ribose 1-diphosphate: step 5/9. Functionally, IGPS catalyzes the conversion of PRFAR and glutamine to IGP, AICAR and glutamate. The HisH subunit catalyzes the hydrolysis of glutamine to glutamate and ammonia as part of the synthesis of IGP and AICAR. The resulting ammonia molecule is channeled to the active site of HisF. The chain is Imidazole glycerol phosphate synthase subunit HisH from Neisseria gonorrhoeae (strain ATCC 700825 / FA 1090).